A 184-amino-acid polypeptide reads, in one-letter code: uncharacterized protein (184 aa).

This sequence belongs to the eIF-2B alpha/beta/delta subunits family.

This is an uncharacterized protein from Rhodospirillum rubrum.